The following is a 291-amino-acid chain: B-lymphocyte antigen CD20 (291 aa).

The Cytoplasmic portion of the chain corresponds to 1 to 44; that stretch reads MSGPFPAEPTKGPLAMQPAPKVNLKRTSSLVGPTQSFFMRESKA. S29 is subject to Phosphoserine. A helical transmembrane segment spans residues 45 to 65; sequence LGAVQIMNGLFHITLGGLLMI. The Extracellular segment spans residues 66–68; it reads PTG. A helical membrane pass occupies residues 69–89; sequence VFAPICLSVWYPLWGGIMYII. Topologically, residues 90 to 111 are cytoplasmic; sequence SGSLLAAAAEKTSRKSLVKAKV. Residues 112–132 form a helical membrane-spanning segment; that stretch reads IMSSLSLFAAISGIILSIMDI. The Extracellular portion of the chain corresponds to 133–182; sequence LNMTLSHFLKMRRLELIQTSKPYVDIYDCEPSNSSEKNSPSTQYCNSIQS. Residues 183–203 traverse the membrane as a helical segment; that stretch reads VFLGILSAMLISAFFQKLVTA. The Cytoplasmic segment spans residues 204-291; that stretch reads GIVENEWKRM…SLPVENEIAP (88 aa). C214 carries S-palmitoyl cysteine lipidation. S219 carries the post-translational modification Phosphoserine. T233 bears the Phosphothreonine mark. The segment covering 261 to 270 has biased composition (acidic residues); it reads VQEEEEEEAE. Residues 261 to 291 are disordered; sequence VQEEEEEEAEINFPAPPQEQESLPVENEIAP.

This sequence belongs to the MS4A family. Forms homotetramers. Interacts with the heavy and light chains of cell surface IgM, the antigen-binding components of the BCR. Post-translationally, phosphorylated.

The protein resides in the cell membrane. Its function is as follows. B-lymphocyte-specific membrane protein that plays a role in the regulation of cellular calcium influx necessary for the development, differentiation, and activation of B-lymphocytes. Functions as a store-operated calcium (SOC) channel component promoting calcium influx after activation by the B-cell receptor/BCR. The polypeptide is B-lymphocyte antigen CD20 (Ms4a1) (Mus musculus (Mouse)).